Consider the following 141-residue polypeptide: Ribonuclease P protein component (141 aa).

Disordered stretches follow at residues 37–56 (RTEE…VGFT) and 114–141 (RRIT…VNGK). Residues 114-124 (RRITAKGERRS) show a composition bias toward basic and acidic residues.

The protein belongs to the RnpA family. Consists of a catalytic RNA component (M1 or rnpB) and a protein subunit.

The enzyme catalyses Endonucleolytic cleavage of RNA, removing 5'-extranucleotides from tRNA precursor.. In terms of biological role, RNaseP catalyzes the removal of the 5'-leader sequence from pre-tRNA to produce the mature 5'-terminus. It can also cleave other RNA substrates such as 4.5S RNA. The protein component plays an auxiliary but essential role in vivo by binding to the 5'-leader sequence and broadening the substrate specificity of the ribozyme. The protein is Ribonuclease P protein component of Brucella melitensis biotype 1 (strain ATCC 23456 / CCUG 17765 / NCTC 10094 / 16M).